The sequence spans 1004 residues: 2-oxoglutarate dehydrogenase E1 component (1004 aa).

It belongs to the alpha-ketoglutarate dehydrogenase family. In terms of assembly, homodimer. Part of the 2-oxoglutarate dehydrogenase (OGDH) complex composed of E1 (2-oxoglutarate dehydrogenase), E2 (dihydrolipoamide succinyltransferase) and E3 (dihydrolipoamide dehydrogenase); the complex contains multiple copies of the three enzymatic components (E1, E2 and E3). The cofactor is thiamine diphosphate.

The enzyme catalyses N(6)-[(R)-lipoyl]-L-lysyl-[protein] + 2-oxoglutarate + H(+) = N(6)-[(R)-S(8)-succinyldihydrolipoyl]-L-lysyl-[protein] + CO2. In terms of biological role, E1 component of the 2-oxoglutarate dehydrogenase (OGDH) complex which catalyzes the decarboxylation of 2-oxoglutarate, the first step in the conversion of 2-oxoglutarate to succinyl-CoA and CO(2). The chain is 2-oxoglutarate dehydrogenase E1 component from Brucella abortus (strain S19).